The following is a 266-amino-acid chain: Apolipoprotein A-I (266 aa).

The N-terminal stretch at 1–18 (MKAVVLTLAVLFLTGSQA) is a signal peptide. Tandem repeats lie at residues 67–88 (LKLLDNWDSLSSTVAKLREQIG) and 89–110 (PVTQEFWDNLEKETEVLRQEMN). Positions 67-266 (LKLLDNWDSL…DEATKKLNAQ (200 aa)) are 10 X approximate tandem repeats. Met-109 is subject to Methionine sulfoxide. Residues 111–121 (KDLEEVKKKVQ) form a 3; half-length repeat. A run of 5 repeats spans residues 122 to 143 (PYLDEFQSKWHEEVELYRQKVA), 144 to 165 (PLGAELREGARQKLQELQEKLS), 166 to 187 (PLGEELRDRARTHVDALRAQLA), 188 to 209 (PYSEQLRERLAARLQALKEGGG), and 210 to 231 (ATLTEYHAKASEHLSALREKAK). A 9; half-length repeat occupies 232 to 242 (PALEDLRQGLM). Repeat unit 10 spans residues 243-266 (PVLESFRASLLAAVDEATKKLNAQ).

This sequence belongs to the apolipoprotein A1/A4/E family. As to quaternary structure, homodimer. Interacts with APOA1BP and CLU. Component of a sperm activating protein complex (SPAP), consisting of APOA1, an immunoglobulin heavy chain, an immunoglobulin light chain and albumin. Interacts with NDRG1. Interacts with SCGB3A2. Interacts with NAXE and YJEFN3. Glycosylated. In terms of processing, palmitoylated. Post-translationally, phosphorylation sites are present in the extracellular medium.

The protein localises to the secreted. Its function is as follows. Participates in the reverse transport of cholesterol from tissues to the liver for excretion by promoting cholesterol efflux from tissues and by acting as a cofactor for the lecithin cholesterol acyltransferase (LCAT). As part of the SPAP complex, activates spermatozoa motility. The sequence is that of Apolipoprotein A-I (APOA1) from Phoca vitulina (Harbor seal).